The primary structure comprises 112 residues: Pediocin PA-1 immunity protein (112 aa).

In terms of biological role, imparts immunity to pediocin PA-1/ACH to naturally sensitive host strains. In Pediococcus acidilactici, this protein is Pediocin PA-1 immunity protein (pedB).